A 153-amino-acid polypeptide reads, in one-letter code: Prostaglandin E synthase (153 aa).

The Lumenal portion of the chain corresponds to Met1 to Val13. The helical transmembrane segment at Leu14–Lys42 threads the bilayer. Residue Arg39 coordinates glutathione. Topologically, residues Lys43 to Arg61 are cytoplasmic. The helical transmembrane segment at Ser62–Ser91 threads the bilayer. Glutathione is bound at residue Arg74–Glu78. Over Phe92 to Leu98 the chain is Lumenal. A helical membrane pass occupies residues Ile99 to Gly120. Glutathione contacts are provided by His114 and Tyr118. At Lys121–Pro124 the chain is on the cytoplasmic side. Residues Arg125 to Leu153 traverse the membrane as a helical segment. Arg127–Tyr131 serves as a coordination point for glutathione.

This sequence belongs to the MAPEG family. Glutathione is required as a cofactor.

It localises to the membrane. Its subcellular location is the cytoplasm. The protein localises to the perinuclear region. It carries out the reaction prostaglandin H2 = prostaglandin E2. The enzyme catalyses 2-glyceryl-prostaglandin H2 = 2-glyceryl-prostaglandin E2. The catalysed reaction is prostaglandin G2 = (15S)-15-hydroperoxy-prostaglandin E2. It catalyses the reaction 1-chloro-2,4-dinitrobenzene + glutathione = 2,4-dinitrophenyl-S-glutathione + chloride + H(+). It carries out the reaction (5S)-hydroperoxy-(6E,8Z,11Z,14Z)-eicosatetraenoate + 2 glutathione = (5S)-hydroxy-(6E,8Z,11Z,14Z)-eicosatetraenoate + glutathione disulfide + H2O. It participates in lipid metabolism; prostaglandin biosynthesis. With respect to regulation, activity is increased following LPS stimulation and down-regulated by the anti-inflammatory glucocorticoid dexamethasone. In terms of biological role, terminal enzyme of the cyclooxygenase (COX)-2-mediated prostaglandin E2 (PGE2) biosynthetic pathway. Catalyzes the glutathione-dependent oxidoreduction of prostaglandin endoperoxide H2 (PGH2) to prostaglandin E2 (PGE2) in response to inflammatory stimuli. Plays a key role in inflammation response, fever and pain. Also catalyzes the oxidoreduction of endocannabinoids into prostaglandin glycerol esters and PGG2 into 15-hydroperoxy-PGE2. In addition, displays low glutathione transferase and glutathione-dependent peroxidase activities, toward 1-chloro-2,4-dinitrobenzene and 5-hydroperoxyicosatetraenoic acid (5-HPETE), respectively. The sequence is that of Prostaglandin E synthase (Ptges) from Rattus norvegicus (Rat).